The primary structure comprises 239 residues: Pentatricopeptide repeat-containing protein DWY1, chloroplastic (239 aa).

The N-terminal 35 residues, 1 to 35 (MALEAAFSMSFCSFSVPKAIFCERETSSFQRITSR), are a transit peptide targeting the chloroplast. Disordered stretches follow at residues 40–59 (AGES…KETS) and 101–122 (HISP…SGGE). A compositionally biased stretch (basic and acidic residues) spans 111-122 (VRGDKPEISGGE). The type E(+) motif stretch occupies residues 113–144 (GDKPEISGGEKKAIVDRSKAYVKLKSLGKEVR). Residues 145–239 (DAGYVPETKY…DGNCSCGDYW (95 aa)) form a type DYW motif region.

Belongs to the PPR family. PCMP-H subfamily. Interacts with CRR4. Requires Zn(2+) as cofactor.

The protein resides in the plastid. It is found in the chloroplast. In terms of biological role, plays a major role in single RNA editing events in chloroplasts. Acts as a site-recognition transacting factor involved in the edition of the site 1 of ndhD (ndhD-1 site corresponding to cytidine-2), which is a plastid-encoded subunit of the NADH-plastoquinone oxidoreductase. The interaction with CRR4 is required for its function in editing the ndhD-1 site. This Arabidopsis thaliana (Mouse-ear cress) protein is Pentatricopeptide repeat-containing protein DWY1, chloroplastic.